Reading from the N-terminus, the 159-residue chain is 2-C-methyl-D-erythritol 2,4-cyclodiphosphate synthase (159 aa).

Positions 10 and 12 each coordinate a divalent metal cation. Residues 10-12 (DVH) and 36-37 (HS) each bind 4-CDP-2-C-methyl-D-erythritol 2-phosphate. His-44 contributes to the a divalent metal cation binding site. Residues 58–60 (DIG), 63–67 (FPDTD), 102–108 (AQAPKMA), 134–137 (TTTE), Phe-141, and Arg-144 each bind 4-CDP-2-C-methyl-D-erythritol 2-phosphate.

Belongs to the IspF family. Homotrimer. A divalent metal cation is required as a cofactor.

The catalysed reaction is 4-CDP-2-C-methyl-D-erythritol 2-phosphate = 2-C-methyl-D-erythritol 2,4-cyclic diphosphate + CMP. It participates in isoprenoid biosynthesis; isopentenyl diphosphate biosynthesis via DXP pathway; isopentenyl diphosphate from 1-deoxy-D-xylulose 5-phosphate: step 4/6. Its function is as follows. Involved in the biosynthesis of isopentenyl diphosphate (IPP) and dimethylallyl diphosphate (DMAPP), two major building blocks of isoprenoid compounds. Catalyzes the conversion of 4-diphosphocytidyl-2-C-methyl-D-erythritol 2-phosphate (CDP-ME2P) to 2-C-methyl-D-erythritol 2,4-cyclodiphosphate (ME-CPP) with a corresponding release of cytidine 5-monophosphate (CMP). The chain is 2-C-methyl-D-erythritol 2,4-cyclodiphosphate synthase from Shewanella piezotolerans (strain WP3 / JCM 13877).